Here is a 215-residue protein sequence, read N- to C-terminus: MLGAVGPGALWGFEREIMNLVPMVVEQTSRGERAYDIYSRLLKERIIFITGTVEDNMASLIVAQLVFLEAENPEKDISLYINSPGGVVTAGLSIYDTMQYIKPKVSTLCLGQAASMGALLLAGGEPGMRYALPNSRIMVHQPSGGFRGQATDIEIHAREILEIKRRLNEIYVKHTGKSLEEIESSMERDNFMVAEKAKDFGIVDKVIDKRGGEQI.

Serine 115 serves as the catalytic Nucleophile. Residue histidine 140 is part of the active site.

This sequence belongs to the peptidase S14 family. In terms of assembly, fourteen ClpP subunits assemble into 2 heptameric rings which stack back to back to give a disk-like structure with a central cavity, resembling the structure of eukaryotic proteasomes.

The protein resides in the cytoplasm. The enzyme catalyses Hydrolysis of proteins to small peptides in the presence of ATP and magnesium. alpha-casein is the usual test substrate. In the absence of ATP, only oligopeptides shorter than five residues are hydrolyzed (such as succinyl-Leu-Tyr-|-NHMec, and Leu-Tyr-Leu-|-Tyr-Trp, in which cleavage of the -Tyr-|-Leu- and -Tyr-|-Trp bonds also occurs).. Functionally, cleaves peptides in various proteins in a process that requires ATP hydrolysis. Has a chymotrypsin-like activity. Plays a major role in the degradation of misfolded proteins. This is ATP-dependent Clp protease proteolytic subunit from Anaplasma marginale (strain Florida).